A 232-amino-acid chain; its full sequence is Single-stranded DNA-binding protein (232 aa).

Residues 189–232 (DWADEVEENGYVASGSAKASKPRDEESWDEDDEESEEADEDGDF) form a disordered region. The tract at residues 212 to 232 (DEESWDEDDEESEEADEDGDF) is dimerization and interaction with the viral DNA polymerase and helicase. The span at 214 to 232 (ESWDEDDEESEEADEDGDF) shows a compositional bias: acidic residues.

This sequence belongs to the Teseptimavirus single-stranded DNA-binding protein family. In terms of assembly, homodimer. Interacts (via C-terminus) with the viral DNA polymerase. Interacts with the viral helicase/primase. Part of the replicase complex that includes the DNA polymerase, host thioredoxin, the primase/helicase and the single-stranded DNA binding protein.

In terms of biological role, single-stranded DNA-binding protein that participates in viral DNA replication, formation of concatemers, recombination and repair of double-stranded breaks. Coats the lagging-strand ssDNA as the replication fork advances and stimulates the activities of viral DNA polymerase and primase/helicase. Coordinates simultaneous synthesis of leading- and lagging-strands. Together with DNA primase/helicase, promotes pairing of two homologous DNA molecules containing complementary single-stranded regions and mediates homologous DNA strand exchange. Also promotes the formation of joint molecules. Disrupts loops, hairpins and other secondary structures present on ssDNA to reduce and eliminate pausing of viral DNA polymerase at specific sites during elongation. The protein is Single-stranded DNA-binding protein of Escherichia phage T7 (Bacteriophage T7).